The following is a 349-amino-acid chain: Ferredoxin--NADP reductase 1 (349 aa).

Residues glutamate 36, lysine 44, tyrosine 48, isoleucine 88, leucine 123, aspartate 290, and serine 331 each coordinate FAD.

This sequence belongs to the ferredoxin--NADP reductase type 2 family. As to quaternary structure, homodimer. The cofactor is FAD.

It catalyses the reaction 2 reduced [2Fe-2S]-[ferredoxin] + NADP(+) + H(+) = 2 oxidized [2Fe-2S]-[ferredoxin] + NADPH. In Bacillus thuringiensis (strain Al Hakam), this protein is Ferredoxin--NADP reductase 1.